The following is a 24-amino-acid chain: Humanin-like 1 (24 aa).

It belongs to the humanin family. As to expression, highly expressed in the kidney, heart muscle and testis.

It localises to the secreted. Its subcellular location is the cytoplasm. Plays a role as a neuroprotective and antiapoptotic factor. This chain is Humanin-like 1, found in Homo sapiens (Human).